The following is a 503-amino-acid chain: ATP synthase subunit alpha (503 aa).

170–177 contacts ATP; the sequence is GDKQTGKT.

It belongs to the ATPase alpha/beta chains family. As to quaternary structure, F-type ATPases have 2 components, CF(1) - the catalytic core - and CF(0) - the membrane proton channel. CF(1) has five subunits: alpha(3), beta(3), gamma(1), delta(1), epsilon(1). CF(0) has three main subunits: a(1), b(2) and c(9-12). The alpha and beta chains form an alternating ring which encloses part of the gamma chain. CF(1) is attached to CF(0) by a central stalk formed by the gamma and epsilon chains, while a peripheral stalk is formed by the delta and b chains.

Its subcellular location is the cell inner membrane. The catalysed reaction is ATP + H2O + 4 H(+)(in) = ADP + phosphate + 5 H(+)(out). Its function is as follows. Produces ATP from ADP in the presence of a proton gradient across the membrane. The alpha chain is a regulatory subunit. The sequence is that of ATP synthase subunit alpha from Helicobacter pylori (strain G27).